The following is a 440-amino-acid chain: GTPase Der (440 aa).

EngA-type G domains follow at residues 4-168 (PIVA…PENK) and 177-352 (IKVA…NQRA). Residues 10–17 (GRPNVGKS), 57–61 (DTGGI), 120–123 (NKVD), 183–190 (GKPNVGKS), 230–234 (DTAGL), and 295–298 (NKWD) each bind GTP. Positions 353-437 (MRVPTGGLNE…PIRFIYREKS (85 aa)) constitute a KH-like domain.

The protein belongs to the TRAFAC class TrmE-Era-EngA-EngB-Septin-like GTPase superfamily. EngA (Der) GTPase family. Associates with the 50S ribosomal subunit.

Its function is as follows. GTPase that plays an essential role in the late steps of ribosome biogenesis. This Alkaliphilus metalliredigens (strain QYMF) protein is GTPase Der.